The chain runs to 546 residues: Chaperonin GroEL (546 aa).

Residues 29-32 (TMGP), Lys50, 86-90 (DGTTT), Gly414, and Asp492 each bind ATP.

This sequence belongs to the chaperonin (HSP60) family. Forms a cylinder of 14 subunits composed of two heptameric rings stacked back-to-back. Interacts with the co-chaperonin GroES.

The protein resides in the cytoplasm. It carries out the reaction ATP + H2O + a folded polypeptide = ADP + phosphate + an unfolded polypeptide.. In terms of biological role, together with its co-chaperonin GroES, plays an essential role in assisting protein folding. The GroEL-GroES system forms a nano-cage that allows encapsulation of the non-native substrate proteins and provides a physical environment optimized to promote and accelerate protein folding. The chain is Chaperonin GroEL from Helicobacter acinonychis (strain Sheeba).